A 173-amino-acid polypeptide reads, in one-letter code: Large ribosomal subunit protein bL9 (173 aa).

It belongs to the bacterial ribosomal protein bL9 family.

Functionally, binds to the 23S rRNA. This chain is Large ribosomal subunit protein bL9, found in Rickettsia bellii (strain RML369-C).